The sequence spans 614 residues: Phragmoplastin DRP1C (614 aa).

The Dynamin-type G domain maps to 32 to 301 (WEALPTVAVV…LETVIRQKIP (270 aa)). Residues 42 to 49 (GGQSSGKS) are G1 motif. GTP is bound at residue 45 to 50 (SSGKSS). The segment at 68–70 (VTR) is G2 motif. The interval 143 to 146 (DLPG) is G3 motif. The tract at residues 212-215 (TKLD) is G4 motif. GTP is bound by residues 213–218 (KLDIMD) and 243–246 (NRSQ). Residues 242 to 245 (VNRS) form a G5 motif region. The disordered stretch occupies residues 499 to 519 (EPEKEKPNPRNAPAPNADPYS). Low complexity predominate over residues 507–517 (PRNAPAPNADP). Residues 523–614 (FRKIGSNVSA…RDDIDAVAWK (92 aa)) enclose the GED domain.

This sequence belongs to the TRAFAC class dynamin-like GTPase superfamily. Dynamin/Fzo/YdjA family. As to quaternary structure, forms homodimer and may homooligomerize and heterooligomerize to form the phragmoplastin complex. Binds to PHIP1. In terms of tissue distribution, ubiquitous.

The protein resides in the cytoplasm. It is found in the cytoskeleton. It localises to the cell cortex. Its subcellular location is the cytoplasmic vesicle. The protein localises to the clathrin-coated vesicle. The protein resides in the phragmoplast. It carries out the reaction GTP + H2O = GDP + phosphate + H(+). In terms of biological role, microtubule-associated force-producing protein that is targeted to the growing edges of the cell plate during cytokinesis. Also plays a major role in plasma membrane maintenance during pollen maturation. Has a GTPase activity. The sequence is that of Phragmoplastin DRP1C from Arabidopsis thaliana (Mouse-ear cress).